Consider the following 296-residue polypeptide: N-acetylmuramic acid 6-phosphate etherase 2 (296 aa).

Positions 55–218 (IVANFKAGGR…STASMVGIGK (164 aa)) constitute an SIS domain. Glutamate 83 functions as the Proton donor in the catalytic mechanism. Residue glutamate 114 is part of the active site.

It belongs to the GCKR-like family. MurNAc-6-P etherase subfamily. Homodimer.

The enzyme catalyses N-acetyl-D-muramate 6-phosphate + H2O = N-acetyl-D-glucosamine 6-phosphate + (R)-lactate. It participates in amino-sugar metabolism; N-acetylmuramate degradation. Functionally, specifically catalyzes the cleavage of the D-lactyl ether substituent of MurNAc 6-phosphate, producing GlcNAc 6-phosphate and D-lactate. This is N-acetylmuramic acid 6-phosphate etherase 2 from Lactiplantibacillus plantarum (strain ATCC BAA-793 / NCIMB 8826 / WCFS1) (Lactobacillus plantarum).